The chain runs to 167 residues: 3-dehydroquinate dehydratase (167 aa).

The active-site Proton acceptor is tyrosine 22. Residues asparagine 76, histidine 82, and aspartate 89 each contribute to the substrate site. Histidine 102 (proton donor) is an active-site residue. Substrate contacts are provided by residues 103 to 104 (LT) and arginine 113.

The protein belongs to the type-II 3-dehydroquinase family. As to quaternary structure, homododecamer.

It catalyses the reaction 3-dehydroquinate = 3-dehydroshikimate + H2O. Its pathway is metabolic intermediate biosynthesis; chorismate biosynthesis; chorismate from D-erythrose 4-phosphate and phosphoenolpyruvate: step 3/7. Functionally, catalyzes a trans-dehydration via an enolate intermediate. The sequence is that of 3-dehydroquinate dehydratase from Helicobacter pylori (strain Shi470).